The following is a 402-amino-acid chain: Zinc finger protein 322 (402 aa).

A C2H2-type 1; atypical zinc finger spans residues 43–65 (YQCLECKQNFCENLALIMCERTH). 8 C2H2-type zinc fingers span residues 71 to 93 (YKCD…QRIH), 99 to 121 (YKCS…QRTH), 127 to 149 (YTCD…QRSH), 155 to 177 (YLCS…RRTH), 183 to 205 (FKCL…QRTH), 211 to 233 (YKCN…KRVH), 239 to 261 (YKCG…QRVH), and 267 to 289 (YKCL…QATH). The segment at 293-315 (FKCLEYEKSFNCSSDLIVHQRIH) adopts a C2H2-type 10; degenerate zinc-finger fold. A C2H2-type 11; degenerate zinc finger spans residues 351–373 (YKYTVCDKSFHQSSALLQHQTVH). The residue at position 391 (Ser391) is a Phosphoserine.

The protein belongs to the krueppel C2H2-type zinc-finger protein family. In terms of assembly, interacts with POU5F1.

The protein resides in the cytoplasm. It is found in the nucleus. Its function is as follows. Transcriptional activator. Important for maintenance of pluripotency in embryonic stem cells. Binds directly to the POU5F1 distal enhancer and the NANOG proximal promoter, and enhances expression of both genes. Can also bind to numerous other gene promoters and regulates expression of many other pluripotency factors, either directly or indirectly. Promotes inhibition of MAPK signaling during embryonic stem cell differentiation. This chain is Zinc finger protein 322 (ZNF322), found in Macaca fascicularis (Crab-eating macaque).